The chain runs to 2871 residues: MRRGRLLEIALGFTVLLASYTSHGADANLEAGNVKETRASRAKRRGGGGHDALKGPNVCGSRYNAYCCPGWKTLPGGNQCIVPICRHSCGDGFCSRPNMCTCPSGQIAPSCGSRSIQHCNIRCMNGGSCSDDHCLCQKGYIGTHCGQPVCESGCLNGGRCVAPNRCACTYGFTGPQCERDYRTGPCFTVISNQMCQGQLSGIVCTKTLCCATVGRAWGHPCEMCPAQPHPCRRGFIPNIRTGACQDVDECQAIPGLCQGGNCINTVGSFECKCPAGHKLNEVSQKCEDIDECSTIPGICEGGECTNTVSSYFCKCPPGFYTSPDGTRCIDVRPGYCYTALTNGRCSNQLPQSITKMQCCCDAGRCWSPGVTVAPEMCPIRATEDFNKLCSVPMVIPGRPEYPPPPLGPIPPVLPVPPGFPPGPQIPVPRPPVEYLYPSREPPRVLPVNVTDYCQLVRYLCQNGRCIPTPGSYRCECNKGFQLDLRGECIDVDECEKNPCAGGECINNQGSYTCQCRAGYQSTLTRTECRDIDECLQNGRICNNGRCINTDGSFHCVCNAGFHVTRDGKNCEDMDECSIRNMCLNGMCINEDGSFKCICKPGFQLASDGRYCKDINECETPGICMNGRCVNTDGSYRCECFPGLAVGLDGRVCVDTHMRSTCYGGYKRGQCIKPLFGAVTKSECCCASTEYAFGEPCQPCPAQNSAEYQALCSSGPGMTSAGSDINECALDPDICPNGICENLRGTYKCICNSGYEVDSTGKNCVDINECVLNSLLCDNGQCRNTPGSFVCTCPKGFIYKPDLKTCEDIDECESSPCINGVCKNSPGSFICECSSESTLDPTKTICIETIKGTCWQTVIDGRCEININGATLKSQCCSSLGAAWGSPCTLCQVDPICGKGYSRIKGTQCEDIDECEVFPGVCKNGLCVNTRGSFKCQCPSGMTLDATGRICLDIRLETCFLRYEDEECTLPIAGRHRMDACCCSVGAAWGTEECEECPMRNTPEYEELCPRGPGFATKEITNGKPFFKDINECKMIPSLCTHGKCRNTIGSFKCRCDSGFALDSEERNCTDIDECRISPDLCGRGQCVNTPGDFECKCDEGYESGFMMMKNCMDIDECQRDPLLCRGGVCHNTEGSYRCECPPGHQLSPNISACIDINECELSAHLCPNGRCVNLIGKYQCACNPGYHSTPDRLFCVDIDECSIMNGGCETFCTNSEGSYECSCQPGFALMPDQRSCTDIDECEDNPNICDGGQCTNIPGEYRCLCYDGFMASEDMKTCVDVNECDLNPNICLSGTCENTKGSFICHCDMGYSGKKGKTGCTDINECEIGAHNCGKHAVCTNTAGSFKCSCSPGWIGDGIKCTDLDECSNGTHMCSQHADCKNTMGSYRCLCKEGYTGDGFTCTDLDECSENLNLCGNGQCLNAPGGYRCECDMGFVPSADGKACEDIDECSLPNICVFGTCHNLPGLFRCECEIGYELDRSGGNCTDVNECLDPTTCISGNCVNTPGSYICDCPPDFELNPTRVGCVDTRSGNCYLDIRPRGDNGDTACSNEIGVGVSKASCCCSLGKAWGTPCEMCPAVNTSEYKILCPGGEGFRPNPITVILEDIDECQELPGLCQGGKCINTFGSFQCRCPTGYYLNEDTRVCDDVNECETPGICGPGTCYNTVGNYTCICPPDYMQVNGGNNCMDMRRSLCYRNYYADNQTCDGELLFNMTKKMCCCSYNIGRAWNKPCEQCPIPSTDEFATLCGSQRPGFVIDIYTGLPVDIDECREIPGVCENGVCINMVGSFRCECPVGFFYNDKLLVCEDIDECQNGPVCQRNAECINTAGSYRCDCKPGYRFTSTGQCNDRNECQEIPNICSHGQCIDTVGSFYCLCHTGFKTNDDQTMCLDINECERDACGNGTCRNTIGSFNCRCNHGFILSHNNDCIDVDECASGNGNLCRNGQCINTVGSFQCQCNEGYEVAPDGRTCVDINECLLEPRKCAPGTCQNLDGSYRCICPPGYSLQNEKCEDIDECVEEPEICALGTCSNTEGSFKCLCPEGFSLSSSGRRCQDLRMSYCYAKFEGGKCSSPKSRNHSKQECCCALKGEGWGDPCELCPTEPDEAFRQICPYGSGIIVGPDDSAVDMDECKEPDVCKHGQCINTDGSYRCECPFGYILAGNECVDTDECSVGNPCGNGTCKNVIGGFECTCEEGFEPGPMMTCEDINECAQNPLLCAFRCVNTYGSYECKCPVGYVLREDRRMCKDEDECEEGKHDCTEKQMECKNLIGTYMCICGPGYQRRPDGEGCVDENECQTKPGICENGRCLNTRGSYTCECNDGFTASPNQDECLDNREGYCFTEVLQNMCQIGSSNRNPVTKSECCCDGGRGWGPHCEICPFQGTVAFKKLCPHGRGFMTNGADIDECKVIHDVCRNGECVNDRGSYHCICKTGYTPDITGTSCVDLNECNQAPKPCNFICKNTEGSYQCSCPKGYILQEDGRSCKDLDECATKQHNCQFLCVNTIGGFTCKCPPGFTQHHTSCIDNNECTSDINLCGSKGICQNTPGSFTCECQRGFSLDQTGSSCEDVDECEGNHRCQHGCQNIIGGYRCSCPQGYLQHYQWNQCVDENECLSAHICGGASCHNTLGSYKCMCPAGFQYEQFSGGCQDINECGSAQAPCSYGCSNTEGGYLCGCPPGYFRIGQGHCVSGMGMGRGNPEPPVSGEMDDNSLSPEACYECKINGYPKRGRKRRSTNETDASNIEDQSETEANVSLASWDVEKTAIFAFNISHVSNKVRILELLPALTTLTNHNRYLIESGNEDGFFKINQKEGISYLHFTKKKPVAGTYSLQISSTPLYKKKELNQLEDKYDKDYLSGELGDNLKMKIQVLLH.

The first 24 residues, 1 to 24, serve as a signal peptide directing secretion; sequence MRRGRLLEIALGFTVLLASYTSHG. Residues 25 to 44 constitute a propeptide that is removed on maturation; sequence ADANLEAGNVKETRASRAKR. A fibrillin unique N-terminal (FUN) domain region spans residues 45–81; sequence RGGGGHDALKGPNVCGSRYNAYCCPGWKTLPGGNQCI. Residues 45–450 form an N-terminal domain region; the sequence is RGGGGHDALK…PPRVLPVNVT (406 aa). 11 cysteine pairs are disulfide-bonded: Cys59–Cys68, Cys67–Cys80, Cys85–Cys94, Cys89–Cys100, Cys102–Cys111, Cys119–Cys129, Cys123–Cys134, Cys136–Cys145, Cys150–Cys160, Cys154–Cys166, and Cys168–Cys177. EGF-like domains follow at residues 81–112, 115–146, and 147–178; these read IVPICRHSCGDGFCSRPNMCTCPSGQIAPSCG, SIQHCNIRCMNGGSCSDDHCLCQKGYIGTHCG, and QPVCESGCLNGGRCVAPNRCACTYGFTGPQCE. Residues 119-329 are interaction with MFAP4; that stretch reads CNIRCMNGGS…YTSPDGTRCI (211 aa). The 53-residue stretch at 184 to 236 folds into the TB 1 domain; it reads GPCFTVISNQMCQGQLSGIVCTKTLCCATVGRAWGHPCEMCPAQPHPCRRGFI. The segment at 195–221 is hybrid domain 1; sequence CQGQLSGIVCTKTLCCATVGRAWGHPC. One can recognise an EGF-like 4; calcium-binding domain in the interval 246–287; it reads DVDECQAIPGLCQGGNCINTVGSFECKCPAGHKLNEVSQKCE. 6 disulfide bridges follow: Cys250–Cys262, Cys257–Cys271, Cys273–Cys286, Cys292–Cys304, Cys299–Cys313, and Cys315–Cys328. The O-linked (Glc) serine glycan is linked to Ser268. Residues 288–329 enclose the EGF-like 5; calcium-binding domain; it reads DIDECSTIPGICEGGECTNTVSSYFCKCPPGFYTSPDGTRCI. The TB 2 domain maps to 334–389; the sequence is GYCYTALTNGRCSNQLPQSITKMQCCCDAGRCWSPGVTVAPEMCPIRATEDFNKLC. An N-linked (GlcNAc...) asparagine glycan is attached at Asn448. Positions 449–489 constitute an EGF-like 6 domain; sequence VTDYCQLVRYLCQNGRCIPTPGSYRCECNKGFQLDLRGECI. Cystine bridges form between Cys453-Cys465, Cys460-Cys474, Cys476-Cys488, Cys494-Cys504, Cys499-Cys513, Cys515-Cys528, Cys534-Cys546, Cys541-Cys555, Cys557-Cys570, Cys576-Cys587, Cys582-Cys596, Cys598-Cys611, Cys617-Cys628, Cys623-Cys637, and Cys639-Cys652. O-linked (Glc) serine glycosylation is present at Ser471. In terms of domain architecture, EGF-like 7; calcium-binding spans 490–529; it reads DVDECEKNPCAGGECINNQGSYTCQCRAGYQSTLTRTECR. The O-linked (Glc) serine glycan is linked to Ser510. Residues 530 to 571 form the EGF-like 8; calcium-binding domain; that stretch reads DIDECLQNGRICNNGRCINTDGSFHCVCNAGFHVTRDGKNCE. The O-linked (Glc) serine glycan is linked to Ser552. The EGF-like 9; calcium-binding domain maps to 572–612; that stretch reads DMDECSIRNMCLNGMCINEDGSFKCICKPGFQLASDGRYCK. O-linked (Glc) serine glycosylation occurs at Ser593. The region spanning 613–653 is the EGF-like 10; calcium-binding domain; the sequence is DINECETPGICMNGRCVNTDGSYRCECFPGLAVGLDGRVCV. Ser634 carries O-linked (Glc) serine glycosylation. In terms of domain architecture, TB 3 spans 659–711; that stretch reads STCYGGYKRGQCIKPLFGAVTKSECCCASTEYAFGEPCQPCPAQNSAEYQALC. The region spanning 723-764 is the EGF-like 11; calcium-binding domain; sequence DINECALDPDICPNGICENLRGTYKCICNSGYEVDSTGKNCV. 16 disulfides stabilise this stretch: Cys727–Cys739, Cys734–Cys748, Cys750–Cys763, Cys769–Cys781, Cys776–Cys790, Cys792–Cys805, Cys811–Cys821, Cys816–Cys830, Cys832–Cys845, Cys853–Cys875, Cys862–Cys887, Cys876–Cys890, Cys896–Cys908, Cys914–Cys926, Cys921–Cys935, and Cys937–Cys950. The 42-residue stretch at 765 to 806 folds into the EGF-like 12; calcium-binding domain; sequence DINECVLNSLLCDNGQCRNTPGSFVCTCPKGFIYKPDLKTCE. Ser787 is a glycosylation site (O-linked (Glc) serine). The 40-residue stretch at 807–846 folds into the EGF-like 13; calcium-binding domain; the sequence is DIDECESSPCINGVCKNSPGSFICECSSESTLDPTKTICI. Ser827 carries O-linked (Glc) serine glycosylation. Residues 851 to 902 enclose the TB 4 domain; sequence GTCWQTVIDGRCEININGATLKSQCCSSLGAAWGSPCTLCQVDPICGKGYSR. The segment at 862-887 is hybrid domain 2; the sequence is CEININGATLKSQCCSSLGAAWGSPC. The EGF-like 14; calcium-binding domain occupies 910-951; sequence DIDECEVFPGVCKNGLCVNTRGSFKCQCPSGMTLDATGRICL. In terms of domain architecture, TB 5 spans 956–1008; that stretch reads ETCFLRYEDEECTLPIAGRHRMDACCCSVGAAWGTEECEECPMRNTPEYEELC. One can recognise an EGF-like 15; calcium-binding domain in the interval 1028–1069; the sequence is DINECKMIPSLCTHGKCRNTIGSFKCRCDSGFALDSEERNCT. Cystine bridges form between Cys1032–Cys1044, Cys1039–Cys1053, Cys1055–Cys1068, Cys1074–Cys1086, Cys1081–Cys1095, Cys1097–Cys1111, Cys1117–Cys1129, Cys1124–Cys1138, Cys1140–Cys1153, Cys1159–Cys1171, Cys1166–Cys1180, Cys1182–Cys1195, Cys1201–Cys1212, Cys1208–Cys1221, Cys1223–Cys1236, Cys1242–Cys1254, Cys1249–Cys1263, Cys1265–Cys1278, Cys1284–Cys1296, Cys1291–Cys1305, Cys1307–Cys1320, Cys1326–Cys1339, Cys1333–Cys1348, Cys1350–Cys1361, Cys1367–Cys1380, Cys1374–Cys1389, Cys1391–Cys1402, Cys1408–Cys1420, Cys1415–Cys1429, Cys1431–Cys1444, Cys1450–Cys1461, Cys1456–Cys1470, Cys1472–Cys1485, Cys1491–Cys1502, Cys1497–Cys1511, Cys1513–Cys1526, Cys1534–Cys1562, Cys1549–Cys1574, Cys1563–Cys1577, Cys1564–Cys1589, Cys1610–Cys1622, Cys1617–Cys1631, Cys1633–Cys1646, Cys1652–Cys1663, Cys1658–Cys1672, and Cys1674–Cys1687. Ser1050 carries an O-linked (Glc) serine glycan. N-linked (GlcNAc...) asparagine glycosylation is present at Asn1067. The 43-residue stretch at 1070 to 1112 folds into the EGF-like 16; calcium-binding domain; sequence DIDECRISPDLCGRGQCVNTPGDFECKCDEGYESGFMMMKNCM. The EGF-like 17; calcium-binding domain occupies 1113–1154; that stretch reads DIDECQRDPLLCRGGVCHNTEGSYRCECPPGHQLSPNISACI. Ser1135 carries an O-linked (Glc) serine glycan. N-linked (GlcNAc...) asparagine glycosylation occurs at Asn1149. The region spanning 1155-1196 is the EGF-like 18; calcium-binding domain; the sequence is DINECELSAHLCPNGRCVNLIGKYQCACNPGYHSTPDRLFCV. An EGF-like 19; calcium-binding domain is found at 1197–1237; that stretch reads DIDECSIMNGGCETFCTNSEGSYECSCQPGFALMPDQRSCT. A glycan (O-linked (Glc) serine) is linked at Ser1218. Residues 1238 to 1279 enclose the EGF-like 20; calcium-binding domain; that stretch reads DIDECEDNPNICDGGQCTNIPGEYRCLCYDGFMASEDMKTCV. One can recognise an EGF-like 21; calcium-binding domain in the interval 1280–1321; it reads DVNECDLNPNICLSGTCENTKGSFICHCDMGYSGKKGKTGCT. The O-linked (Glc) serine glycan is linked to Ser1302. An EGF-like 22; calcium-binding domain is found at 1322–1362; sequence DINECEIGAHNCGKHAVCTNTAGSFKCSCSPGWIGDGIKCT. O-linked (Glc) serine glycosylation is present at Ser1345. Residues 1363–1403 enclose the EGF-like 23; calcium-binding domain; it reads DLDECSNGTHMCSQHADCKNTMGSYRCLCKEGYTGDGFTCT. N-linked (GlcNAc...) asparagine glycosylation occurs at Asn1369. Ser1386 is a glycosylation site (O-linked (Glc) serine). In terms of domain architecture, EGF-like 24; calcium-binding spans 1404-1445; that stretch reads DLDECSENLNLCGNGQCLNAPGGYRCECDMGFVPSADGKACE. The EGF-like 25; calcium-binding domain occupies 1446–1486; it reads DIDECSLPNICVFGTCHNLPGLFRCECEIGYELDRSGGNCT. The N-linked (GlcNAc...) asparagine glycan is linked to Asn1484. One can recognise an EGF-like 26; calcium-binding domain in the interval 1487–1527; that stretch reads DVNECLDPTTCISGNCVNTPGSYICDCPPDFELNPTRVGCV. A glycan (O-linked (Glc) serine) is linked at Ser1508. Residues 1528–2731 form a C-terminal domain region; that stretch reads DTRSGNCYLD…GYPKRGRKRR (1204 aa). One can recognise a TB 6 domain in the interval 1532-1589; the sequence is GNCYLDIRPRGDNGDTACSNEIGVGVSKASCCCSLGKAWGTPCEMCPAVNTSEYKILC. The Cell attachment site signature appears at 1541–1543; it reads RGD. The N-linked (GlcNAc...) asparagine glycan is linked to Asn1581. One can recognise an EGF-like 27; calcium-binding domain in the interval 1606 to 1647; the sequence is DIDECQELPGLCQGGKCINTFGSFQCRCPTGYYLNEDTRVCD. Residue Ser1628 is glycosylated (O-linked (Glc) serine). The region spanning 1648–1688 is the EGF-like 28; calcium-binding domain; that stretch reads DVNECETPGICGPGTCYNTVGNYTCICPPDYMQVNGGNNCM. The N-linked (GlcNAc...) asparagine glycan is linked to Asn1669. A TB 7 domain is found at 1693–1748; that stretch reads SLCYRNYYADNQTCDGELLFNMTKKMCCCSYNIGRAWNKPCEQCPIPSTDEFATLC. N-linked (GlcNAc...) asparagine glycans are attached at residues Asn1703 and Asn1713. The 42-residue stretch at 1766–1807 folds into the EGF-like 29; calcium-binding domain; sequence DIDECREIPGVCENGVCINMVGSFRCECPVGFFYNDKLLVCE. 40 cysteine pairs are disulfide-bonded: Cys1770–Cys1782, Cys1777–Cys1791, Cys1793–Cys1806, Cys1812–Cys1824, Cys1818–Cys1833, Cys1835–Cys1847, Cys1853–Cys1865, Cys1860–Cys1874, Cys1876–Cys1889, Cys1895–Cys1905, Cys1900–Cys1914, Cys1916–Cys1928, Cys1934–Cys1947, Cys1942–Cys1956, Cys1958–Cys1971, Cys1977–Cys1989, Cys1984–Cys1998, Cys2000–Cys2011, Cys2017–Cys2029, Cys2024–Cys2038, Cys2040–Cys2053, Cys2061–Cys2083, Cys2070–Cys2096, Cys2084–Cys2099, Cys2085–Cys2111, Cys2131–Cys2142, Cys2137–Cys2151, Cys2153–Cys2164, Cys2170–Cys2181, Cys2176–Cys2190, Cys2192–Cys2204, Cys2210–Cys2221, Cys2217–Cys2230, Cys2232–Cys2245, Cys2251–Cys2265, Cys2258–Cys2274, Cys2276–Cys2289, Cys2295–Cys2307, Cys2302–Cys2316, and Cys2318–Cys2331. Residues 1808-1848 enclose the EGF-like 30; calcium-binding domain; sequence DIDECQNGPVCQRNAECINTAGSYRCDCKPGYRFTSTGQCN. Residue Ser1830 is glycosylated (O-linked (Glc) serine). In terms of domain architecture, EGF-like 31; calcium-binding spans 1849–1890; that stretch reads DRNECQEIPNICSHGQCIDTVGSFYCLCHTGFKTNDDQTMCL. O-linked (Glc) serine glycosylation occurs at Ser1871. Residues 1891–1929 enclose the EGF-like 32; calcium-binding domain; the sequence is DINECERDACGNGTCRNTIGSFNCRCNHGFILSHNNDCI. Residue Asn1902 is glycosylated (N-linked (GlcNAc...) asparagine). O-linked (Glc) serine glycosylation occurs at Ser1911. An EGF-like 33; calcium-binding domain is found at 1930–1972; the sequence is DVDECASGNGNLCRNGQCINTVGSFQCQCNEGYEVAPDGRTCV. An O-linked (Glc) serine glycan is attached at Ser1953. Residues 1973 to 2012 enclose the EGF-like 34; calcium-binding domain; the sequence is DINECLLEPRKCAPGTCQNLDGSYRCICPPGYSLQNEKCE. Residues 2013–2054 enclose the EGF-like 35; calcium-binding domain; that stretch reads DIDECVEEPEICALGTCSNTEGSFKCLCPEGFSLSSSGRRCQ. O-linked (Glc) serine glycosylation occurs at Ser2035. Residues 2059-2111 enclose the TB 8 domain; sequence SYCYAKFEGGKCSSPKSRNHSKQECCCALKGEGWGDPCELCPTEPDEAFRQIC. Asn2077 carries an N-linked (GlcNAc...) asparagine glycan. The EGF-like 36; calcium-binding domain maps to 2127–2165; it reads DMDECKEPDVCKHGQCINTDGSYRCECPFGYILAGNECV. The O-linked (Glc) serine glycan is linked to Ser2148. Positions 2166 to 2205 constitute an EGF-like 37; calcium-binding domain; it reads DTDECSVGNPCGNGTCKNVIGGFECTCEEGFEPGPMMTCE. Asn2178 carries an N-linked (GlcNAc...) asparagine glycan. Residues 2206 to 2246 enclose the EGF-like 38; calcium-binding domain; sequence DINECAQNPLLCAFRCVNTYGSYECKCPVGYVLREDRRMCK. O-linked (Glc) serine glycosylation is present at Ser2227. In terms of domain architecture, EGF-like 39; calcium-binding spans 2247–2290; the sequence is DEDECEEGKHDCTEKQMECKNLIGTYMCICGPGYQRRPDGEGCV. The EGF-like 40; calcium-binding domain occupies 2291-2332; it reads DENECQTKPGICENGRCLNTRGSYTCECNDGFTASPNQDECL. Ser2313 carries O-linked (Glc) serine glycosylation. Residues 2337 to 2390 form the TB 9 domain; it reads GYCFTEVLQNMCQIGSSNRNPVTKSECCCDGGRGWGPHCEICPFQGTVAFKKLC. The EGF-like 41; calcium-binding domain occupies 2402-2443; it reads DIDECKVIHDVCRNGECVNDRGSYHCICKTGYTPDITGTSCV. 21 cysteine pairs are disulfide-bonded: Cys2406–Cys2418, Cys2413–Cys2427, Cys2429–Cys2442, Cys2448–Cys2459, Cys2455–Cys2468, Cys2470–Cys2483, Cys2489–Cys2500, Cys2496–Cys2509, Cys2511–Cys2522, Cys2528–Cys2541, Cys2535–Cys2550, Cys2552–Cys2565, Cys2571–Cys2581, Cys2577–Cys2590, Cys2592–Cys2605, Cys2611–Cys2622, Cys2617–Cys2631, Cys2633–Cys2646, Cys2652–Cys2663, Cys2659–Cys2672, and Cys2674–Cys2686. In terms of domain architecture, EGF-like 42; calcium-binding spans 2444 to 2484; the sequence is DLNECNQAPKPCNFICKNTEGSYQCSCPKGYILQEDGRSCK. O-linked (Glc) serine glycosylation is present at Ser2465. The EGF-like 43; calcium-binding domain occupies 2485–2523; it reads DLDECATKQHNCQFLCVNTIGGFTCKCPPGFTQHHTSCI. Residues 2524–2566 enclose the EGF-like 44; calcium-binding domain; that stretch reads DNNECTSDINLCGSKGICQNTPGSFTCECQRGFSLDQTGSSCE. Ser2547 carries an O-linked (Glc) serine glycan. The EGF-like 45; calcium-binding domain occupies 2567–2606; the sequence is DVDECEGNHRCQHGCQNIIGGYRCSCPQGYLQHYQWNQCV. In terms of domain architecture, EGF-like 46; calcium-binding spans 2607–2647; it reads DENECLSAHICGGASCHNTLGSYKCMCPAGFQYEQFSGGCQ. O-linked (Glc) serine glycosylation occurs at Ser2628. One can recognise an EGF-like 47; calcium-binding domain in the interval 2648–2687; sequence DINECGSAQAPCSYGCSNTEGGYLCGCPPGYFRIGQGHCV. Ser2702 is modified (phosphoserine; by FAM20C). Ser2709 is modified (phosphoserine). The disordered stretch occupies residues 2726 to 2746; the sequence is RGRKRRSTNETDASNIEDQSE. Asn2734 is a glycosylation site (N-linked (GlcNAc...) asparagine). A compositionally biased stretch (polar residues) spans 2735–2746; it reads ETDASNIEDQSE. Residues Asn2750 and Asn2767 are each glycosylated (N-linked (GlcNAc...) asparagine).

Belongs to the fibrillin family. In terms of assembly, interacts with COL16A1. Interacts with integrin alpha-V/beta-3. Interacts with ADAMTS10; this interaction promotes microfibril assembly. Interacts with THSD4; this interaction promotes fibril formation. Interacts (via N-terminal domain) with FBLN2 and FBLN5. Interacts with ELN. Forms a ternary complex with ELN and FBLN2 or FBLN5 and a significant interaction with ELN seen only in the presence of FBLN2 or FBLN5. Interacts (via N-terminal domain) with LTBP2 (via C-terminal domain) in a Ca(+2)-dependent manner. Interacts (via N-terminal domain) with LTBP1 (via C-terminal domain). Interacts with integrins ITGA5:ITGB1, ITGAV:ITGB3 and ITGAV:ITGB6. Interacts (via N-terminal domain) with BMP2, BMP4, BMP7, BMP10 and GDF5. Interacts (via N-terminal domain) with MFAP2 and MFAP5. Interacts with ADAMTSL5. Interacts with MFAP4. Interacts (via N-terminal domain) with TNFSF11 in a Ca(+2)-dependent manner. Interacts (via N-terminal domain) with EFEMP2; this interaction inhibits EFEMP2 binding to LOX and ELN. Cleavage of N- and C-terminus by furin is required for incorporation into the extracellular matrix and assembly into microfibrils. The C-terminus, which corresponds to the Asprosin chain, was initially thought to constitute a propeptide. Fibrillin-1 and Asprosin chains are still linked together during the secretion from cells, but are subsequently separated by furin, an essential step for incorporation of Fibrillin-1 into the nascent microfibrils. Post-translationally, forms intermolecular disulfide bonds either with other fibrillin-1 molecules or with other components of the microfibrils. In terms of processing, O-glycosylated on serine residues by POGLUT2 and POGLUT3 which is necessary for efficient protein secretion.

Its subcellular location is the secreted. It localises to the extracellular space. It is found in the extracellular matrix. Its function is as follows. Structural component of the 10-12 nm diameter microfibrils of the extracellular matrix, which conveys both structural and regulatory properties to load-bearing connective tissues. Fibrillin-1-containing microfibrils provide long-term force bearing structural support. In tissues such as the lung, blood vessels and skin, microfibrils form the periphery of the elastic fiber, acting as a scaffold for the deposition of elastin. In addition, microfibrils can occur as elastin-independent networks in tissues such as the ciliary zonule, tendon, cornea and glomerulus where they provide tensile strength and have anchoring roles. Fibrillin-1 also plays a key role in tissue homeostasis through specific interactions with growth factors, such as the bone morphogenetic proteins (BMPs), growth and differentiation factors (GDFs) and latent transforming growth factor-beta-binding proteins (LTBPs), cell-surface integrins and other extracellular matrix protein and proteoglycan components. Regulates osteoblast maturation by controlling TGF-beta bioavailability and calibrating TGF-beta and BMP levels, respectively. Negatively regulates osteoclastogenesis by binding and sequestering an osteoclast differentiation and activation factor TNFSF11. This leads to disruption of TNFSF11-induced Ca(2+) signaling and impairment of TNFSF11-mediated nuclear translocation and activation of transcription factor NFATC1 which regulates genes important for osteoclast differentiation and function. Mediates cell adhesion via its binding to cell surface receptors integrins ITGAV:ITGB3 and ITGA5:ITGB1. Binds heparin and this interaction has an important role in the assembly of microfibrils. Adipokine secreted by white adipose tissue that plays an important regulatory role in the glucose metabolism of liver, muscle and pancreas. Hormone that targets the liver in response to fasting to increase plasma glucose levels. Binds the olfactory receptor OR4M1 at the surface of hepatocytes and promotes hepatocyte glucose release by activating the protein kinase A activity in the liver, resulting in rapid glucose release into the circulation. May act as a regulator of adaptive thermogenesis by inhibiting browning and energy consumption, while increasing lipid deposition in white adipose tissue. Also acts as an orexigenic hormone that increases appetite: crosses the blood brain barrier and exerts effects on the hypothalamus. In the arcuate nucleus of the hypothalamus, asprosin directly activates orexigenic AgRP neurons and indirectly inhibits anorexigenic POMC neurons, resulting in appetite stimulation. Activates orexigenic AgRP neurons via binding to the olfactory receptor OR4M1. May also play a role in sperm motility in testis via interaction with OR4M1 receptor. This chain is Fibrillin-1, found in Homo sapiens (Human).